A 956-amino-acid polypeptide reads, in one-letter code: Endogenous retrovirus group K member 6 Pol protein (956 aa).

In terms of domain architecture, Reverse transcriptase spans 57 to 245; sequence LEKGHIEPSF…TPFHYLGMQI (189 aa). The LPQG signature appears at 161-164; sequence LPQG. The short motif at 195–198 is the YXDD element; sequence CIDD. In terms of domain architecture, RNase H type-1 spans 460–590; sequence LENALTVFTD…ADLLVSSALI (131 aa). Residues Asp-469, Glu-497, Asp-517, and Asp-582 each contribute to the Mg(2+) site. The Integrase-type zinc-finger motif lies at 587 to 628; it reads SALIKAQELHALTHVNAAGLKNKFDVTWKQAKDIVQHCTQCQ. Positions 596, 600, 624, and 627 each coordinate Zn(2+). One can recognise an Integrase catalytic domain in the interval 642 to 803; that stretch reads RGLCPNALWQ…TSAEQHLTGK (162 aa). The integrase-type DNA-binding region spans 811-859; sequence KLIWWKDNKNKTWEIGKVITWGRGFACVSPGENQLPVWIPTRHLKFYNE. Residues 865 to 890 form a disordered region; the sequence is KKSTSAETETSQSSTVDSQDEQNGDV. Positions 869 to 879 are enriched in low complexity; sequence SAETETSQSST.

It belongs to the beta type-B retroviral polymerase family. HERV class-II K(HML-2) pol subfamily. Cleavage sites that yield the mature proteins remain to be determined.

The enzyme catalyses DNA(n) + a 2'-deoxyribonucleoside 5'-triphosphate = DNA(n+1) + diphosphate. It carries out the reaction Endonucleolytic cleavage to 5'-phosphomonoester.. Its function is as follows. Early post-infection, the reverse transcriptase converts the viral RNA genome into double-stranded viral DNA. The RNase H domain of the reverse transcriptase performs two functions. It degrades the RNA template and specifically removes the RNA primer from the RNA/DNA hybrid. Following nuclear import, the integrase catalyzes the insertion of the linear, double-stranded viral DNA into the host cell chromosome. Endogenous Pol proteins may have kept, lost or modified their original function during evolution. This chain is Endogenous retrovirus group K member 6 Pol protein (ERVK-6), found in Homo sapiens (Human).